Reading from the N-terminus, the 455-residue chain is Nucleolar protein 12 (455 aa).

2 disordered regions span residues 1–104 (MSSF…ENEN) and 117–142 (QNEE…RTKA). The span at 24 to 37 (NTRDGPVSKDELVK) shows a compositional bias: basic and acidic residues. Positions 51–66 (PKQQTNENESTLNQSA) are enriched in polar residues. The segment covering 68–91 (ESDEEEEEYNDESNEGDDSDDAEQ) has biased composition (acidic residues). Positions 124–141 (SKESSEAKSSKVAEERTK) are enriched in basic and acidic residues. 2 RRM domains span residues 160–258 (RTVF…HVSH) and 266–351 (RTIF…RAKS). Disordered regions lie at residues 333–402 (LETG…RSTV) and 420–455 (AIKG…MNKV). Residues 339–348 (KKGRKLRISR) are compositionally biased toward basic residues. The span at 349–363 (AKSNAKPSLMSPNHF) shows a compositional bias: polar residues. A compositionally biased stretch (basic residues) spans 425-438 (KGSKKGKKVKKPRI). A compositionally biased stretch (basic and acidic residues) spans 439-455 (RERSTKFKEERKTMNKV).

Belongs to the RRM RBM34 family.

It is found in the nucleus. The protein localises to the nucleolus. Functionally, involved in pre-25S rRNA processing. The protein is Nucleolar protein 12 (NOP12) of Candida albicans (strain SC5314 / ATCC MYA-2876) (Yeast).